The primary structure comprises 200 residues: LexA repressor (200 aa).

Active-site for autocatalytic cleavage activity residues include serine 121 and lysine 158.

This sequence belongs to the peptidase S24 family. In terms of assembly, homodimer.

It carries out the reaction Hydrolysis of Ala-|-Gly bond in repressor LexA.. In terms of biological role, binds a consensus sequence 5'-TGTTC-N(4)-GAACA-3'; some genes have a tandem consensus sequence and their binding is cooperative. Binds to the promoters of a number of genes, including lexA and splB. Represses a number of genes involved in the response to DNA damage (SOS response). The chain is LexA repressor from Opitutus terrae (strain DSM 11246 / JCM 15787 / PB90-1).